Consider the following 187-residue polypeptide: uncharacterized protein (187 aa).

The helical transmembrane segment at Phe8–Leu28 threads the bilayer.

The protein resides in the membrane. This is an uncharacterized protein from Bacillus subtilis (strain 168).